We begin with the raw amino-acid sequence, 395 residues long: ATP phosphoribosyltransferase regulatory subunit (395 aa).

Belongs to the class-II aminoacyl-tRNA synthetase family. HisZ subfamily. Heteromultimer composed of HisG and HisZ subunits.

Its subcellular location is the cytoplasm. It participates in amino-acid biosynthesis; L-histidine biosynthesis; L-histidine from 5-phospho-alpha-D-ribose 1-diphosphate: step 1/9. Required for the first step of histidine biosynthesis. May allow the feedback regulation of ATP phosphoribosyltransferase activity by histidine. In Azotobacter vinelandii (strain DJ / ATCC BAA-1303), this protein is ATP phosphoribosyltransferase regulatory subunit.